The chain runs to 348 residues: tRNA pseudouridine synthase D (348 aa).

The Nucleophile role is filled by D81. Residues 158 to 304 (GVPNYFGAQR…MRHERRSIEL (147 aa)) enclose the TRUD domain.

This sequence belongs to the pseudouridine synthase TruD family.

The catalysed reaction is uridine(13) in tRNA = pseudouridine(13) in tRNA. In terms of biological role, responsible for synthesis of pseudouridine from uracil-13 in transfer RNAs. This chain is tRNA pseudouridine synthase D, found in Aliivibrio salmonicida (strain LFI1238) (Vibrio salmonicida (strain LFI1238)).